Here is a 441-residue protein sequence, read N- to C-terminus: Maltose-6'-phosphate glucosidase MalH (441 aa).

Residue 4-70 (FSVVIAGGGS…PEIEFLATTN (67 aa)) coordinates NAD(+). Positions 93 and 147 each coordinate substrate. Position 169 (C169) interacts with Mn(2+). The Proton donor role is filled by D170. H200 contributes to the Mn(2+) binding site. Y264 acts as the Proton acceptor in catalysis. R284 is a substrate binding site.

As to quaternary structure, homotetramer. It depends on NAD(+) as a cofactor. Mn(2+) is required as a cofactor.

The enzyme catalyses alpha-maltose 6'-phosphate + H2O = D-glucose 6-phosphate + D-glucose. In terms of biological role, catalyzes the hydrolysis of O-alpha-linked disaccharide 6-phosphates, including maltose-6'P and all five phosphorylated isomers of sucrose, but not sucrose-6P. Does not hydrolyze beta-linked disaccharide 6-phosphates such as cellobiose-6'P and gentiobiose-6'P. Is involved in the dissimilation of maltose and related O-alpha-linked glucosides produced via the phosphoenolpyruvate-dependent sugar phosphotransferase system (PEP-PTS). The polypeptide is Maltose-6'-phosphate glucosidase MalH (malH) (Clostridium acetobutylicum (strain ATCC 824 / DSM 792 / JCM 1419 / IAM 19013 / LMG 5710 / NBRC 13948 / NRRL B-527 / VKM B-1787 / 2291 / W)).